We begin with the raw amino-acid sequence, 688 residues long: DNA ligase (688 aa).

Residues 51–55 (DSEYD), 100–101 (SL), and Glu-129 each bind NAD(+). The active-site N6-AMP-lysine intermediate is the Lys-131. Arg-152, Glu-189, Lys-308, and Lys-332 together coordinate NAD(+). Cys-426, Cys-429, Cys-444, and Cys-450 together coordinate Zn(2+). The region spanning 609–688 (ADEQPLKGQT…DELLALLANS (80 aa)) is the BRCT domain.

Belongs to the NAD-dependent DNA ligase family. LigA subfamily. Mg(2+) is required as a cofactor. Mn(2+) serves as cofactor.

The enzyme catalyses NAD(+) + (deoxyribonucleotide)n-3'-hydroxyl + 5'-phospho-(deoxyribonucleotide)m = (deoxyribonucleotide)n+m + AMP + beta-nicotinamide D-nucleotide.. Its function is as follows. DNA ligase that catalyzes the formation of phosphodiester linkages between 5'-phosphoryl and 3'-hydroxyl groups in double-stranded DNA using NAD as a coenzyme and as the energy source for the reaction. It is essential for DNA replication and repair of damaged DNA. The protein is DNA ligase of Shewanella sp. (strain MR-4).